The sequence spans 69 residues: Alpha-conotoxin-like Tx1 (69 aa).

The N-terminal stretch at 1-21 (MGMRMMFVVFLLVVLASTVVS) is a signal peptide. Positions 22–49 (STSGRRAFHGRNAAAKASGLVSLTDRRP) are excised as a propeptide. Intrachain disulfides connect Cys51–Cys57 and Cys52–Cys65. Residues 53-55 (SDP) are ser-Xaa-Pro motif, crucial for potent interaction with nAChR. The residue at position 66 (Gly66) is a Glycine amide.

The protein belongs to the conotoxin A superfamily. Expressed by the venom duct.

The protein localises to the secreted. Functionally, alpha-conotoxins act on postsynaptic membranes, they bind to the nicotinic acetylcholine receptors (nAChR) and thus inhibit them. This chain is Alpha-conotoxin-like Tx1, found in Conus textile (Cloth-of-gold cone).